The chain runs to 301 residues: Cytosolic sulfotransferase 2 (301 aa).

Residue 53–58 (KAGTTW) coordinates 3'-phosphoadenylyl sulfate. The active-site Proton acceptor is His115. 3'-phosphoadenylyl sulfate contacts are provided by residues Arg137, Ser145, Tyr201, 235–240 (VQFDVM), and 263–265 (RKG).

This sequence belongs to the sulfotransferase 1 family. As to expression, expressed in liver.

It is found in the cytoplasm. Inhibited by Co(2+), Zn(2+), Cd(2+) and Pb(2+) ions. Inactivated by Hg(2+) and Cu(2+) ions. Its function is as follows. Sulfotransferase that utilizes 3'-phospho-5'-adenylyl sulfate (PAPS) as sulfonate donor to catalyze the sulfate conjugation of a variety of xenobiotic and endogenous compounds, including 2-naphthol, hydroxychlorobiphenyls, T3 (triiodo-L-thyronine), T4 (thyroxine), estrone and DOPA. In Danio rerio (Zebrafish), this protein is Cytosolic sulfotransferase 2.